The sequence spans 616 residues: Dihydroxy-acid dehydratase (616 aa).

Asp81 serves as a coordination point for Mg(2+). Cys122 is a [2Fe-2S] cluster binding site. The Mg(2+) site is built by Asp123 and Lys124. Residue Lys124 is modified to N6-carboxylysine. Cys195 contributes to the [2Fe-2S] cluster binding site. Position 491 (Glu491) interacts with Mg(2+). The active-site Proton acceptor is the Ser517.

It belongs to the IlvD/Edd family. Homodimer. [2Fe-2S] cluster serves as cofactor. It depends on Mg(2+) as a cofactor.

It carries out the reaction (2R)-2,3-dihydroxy-3-methylbutanoate = 3-methyl-2-oxobutanoate + H2O. It catalyses the reaction (2R,3R)-2,3-dihydroxy-3-methylpentanoate = (S)-3-methyl-2-oxopentanoate + H2O. It participates in amino-acid biosynthesis; L-isoleucine biosynthesis; L-isoleucine from 2-oxobutanoate: step 3/4. It functions in the pathway amino-acid biosynthesis; L-valine biosynthesis; L-valine from pyruvate: step 3/4. Its function is as follows. Functions in the biosynthesis of branched-chain amino acids. Catalyzes the dehydration of (2R,3R)-2,3-dihydroxy-3-methylpentanoate (2,3-dihydroxy-3-methylvalerate) into 2-oxo-3-methylpentanoate (2-oxo-3-methylvalerate) and of (2R)-2,3-dihydroxy-3-methylbutanoate (2,3-dihydroxyisovalerate) into 2-oxo-3-methylbutanoate (2-oxoisovalerate), the penultimate precursor to L-isoleucine and L-valine, respectively. This chain is Dihydroxy-acid dehydratase, found in Salmonella paratyphi C (strain RKS4594).